Consider the following 197-residue polypeptide: Lipoprotein signal peptidase (197 aa).

2 helical membrane-spanning segments follow: residues 73 to 93 (SNAIFLITNTLIVCYLYYLMI) and 97 to 117 (TIGSFAGYSFVIGGAVGNLID). Catalysis depends on residues aspartate 126 and aspartate 144. The chain crosses the membrane as a helical span at residues 135–155 (YSFPVFNLADCFITIGVIILI).

The protein belongs to the peptidase A8 family.

It is found in the cell inner membrane. It catalyses the reaction Release of signal peptides from bacterial membrane prolipoproteins. Hydrolyzes -Xaa-Yaa-Zaa-|-(S,diacylglyceryl)Cys-, in which Xaa is hydrophobic (preferably Leu), and Yaa (Ala or Ser) and Zaa (Gly or Ala) have small, neutral side chains.. The protein operates within protein modification; lipoprotein biosynthesis (signal peptide cleavage). Functionally, this protein specifically catalyzes the removal of signal peptides from prolipoproteins. This Rickettsia felis (strain ATCC VR-1525 / URRWXCal2) (Rickettsia azadi) protein is Lipoprotein signal peptidase.